A 358-amino-acid polypeptide reads, in one-letter code: Aromatic amino acid aminotransferase (358 aa).

An N6-(pyridoxal phosphate)lysine modification is found at K219.

The protein belongs to the class-II pyridoxal-phosphate-dependent aminotransferase family. As to quaternary structure, homodimer. The cofactor is pyridoxal 5'-phosphate.

It catalyses the reaction an aromatic L-alpha-amino acid + 2-oxoglutarate = an aromatic oxo-acid + L-glutamate. Its function is as follows. Aminotransferase that catalyzes the conversion of aromatic amino acids and 2-oxoglutarate into corresponding aromatic oxo acids and L-glutamate. This chain is Aromatic amino acid aminotransferase, found in Nocardia farcinica (strain IFM 10152).